A 200-amino-acid chain; its full sequence is Serotonin N-acetyltransferase 2, chloroplastic (200 aa).

The N-terminal 41 residues, 1–41, are a transit peptide targeting the chloroplast; sequence MQMQAARPRVGVRPRGGIRPFPLPTLSFNNNSNRSACACAC. The 141-residue stretch at 55 to 195 folds into the N-acetyltransferase domain; that stretch reads FAVRRSSTGL…MAFYRSRQQI (141 aa).

It is found in the cytoplasm. The protein localises to the plastid. Its subcellular location is the chloroplast. The enzyme catalyses serotonin + acetyl-CoA = N-acetylserotonin + CoA + H(+). The catalysed reaction is tyramine + acetyl-CoA = N-acetyltyramine + CoA + H(+). It carries out the reaction tryptamine + acetyl-CoA = N-acetyltryptamine + CoA + H(+). It catalyses the reaction 5-methoxytryptamine + acetyl-CoA = melatonin + CoA + H(+). It participates in aromatic compound metabolism; melatonin biosynthesis; melatonin from serotonin: step 1/2. Functionally, catalyzes the N-acetylation of serotonin into N-acetylserotonin, the penultimate step in the synthesis of melatonin. Catalyzes in vitro the N-acetylation of tryptamine to produce N-acetyltryptamine, 5-methoxytryptamine to produce melatonin and tyramine to produce N-acetyltyramine. The chain is Serotonin N-acetyltransferase 2, chloroplastic from Oryza sativa subsp. japonica (Rice).